A 378-amino-acid polypeptide reads, in one-letter code: Heat-inducible transcription repressor HrcA (378 aa).

The protein belongs to the HrcA family.

Functionally, negative regulator of class I heat shock genes (grpE-dnaK-dnaJ and groELS operons). Prevents heat-shock induction of these operons. This is Heat-inducible transcription repressor HrcA from Synechocystis sp. (strain ATCC 27184 / PCC 6803 / Kazusa).